The sequence spans 1899 residues: Protein TIC 214 (1899 aa).

6 helical membrane passes run 23 to 43 (VVVG…SYLF), 64 to 84 (FITG…HLAL), 87 to 107 (PHTI…WNNH), 124 to 144 (LSIQ…LFIL), 172 to 192 (VGWL…LVCI), and 217 to 237 (WTAR…LGVH). Disordered regions lie at residues 256–280 (EQKK…TKKE) and 1581–1619 (PKDY…GLDL). The segment covering 269–280 (EKTFETKETKKE) has biased composition (basic and acidic residues).

The protein belongs to the TIC214 family. In terms of assembly, part of the Tic complex.

It localises to the plastid. The protein resides in the chloroplast inner membrane. Involved in protein precursor import into chloroplasts. May be part of an intermediate translocation complex acting as a protein-conducting channel at the inner envelope. The protein is Protein TIC 214 of Ceratophyllum demersum (Rigid hornwort).